The primary structure comprises 732 residues: Acylamino-acid-releasing enzyme (732 aa).

M1 is subject to N-acetylmethionine. A phosphoserine mark is found at S185 and S187. Catalysis depends on charge relay system residues S587, D675, and H707.

It belongs to the peptidase S9C family. Homotetramer.

The protein localises to the cytoplasm. It catalyses the reaction Cleavage of an N-acetyl or N-formyl amino acid from the N-terminus of a polypeptide.. Homotetramerization is required for activity. Tetramerization results in the formation of a gated channel which is involved in substrate selection and substrate access to the catalytic sites. This enzyme catalyzes the hydrolysis of the N-terminal peptide bond of an N-acetylated peptide to generate an N-acetylated amino acid and a peptide with a free N-terminus. It preferentially cleaves off Ac-Ala, Ac-Met and Ac-Ser. Also, involved in the degradation of oxidized and glycated proteins. This Mus musculus (Mouse) protein is Acylamino-acid-releasing enzyme (Apeh).